The sequence spans 508 residues: Catalase (508 aa).

Residues His63 and Asn136 contribute to the active site. Residue Tyr346 coordinates heme.

Belongs to the catalase family. In terms of assembly, homohexamer. Heme is required as a cofactor.

It is found in the cytoplasm. It catalyses the reaction 2 H2O2 = O2 + 2 H2O. Decomposes hydrogen peroxide into water and oxygen; serves to protect cells from the toxic effects of hydrogen peroxide. This is Catalase (katA) from Haemophilus influenzae (strain ATCC 51907 / DSM 11121 / KW20 / Rd).